Here is a 51-residue protein sequence, read N- to C-terminus: Large ribosomal subunit protein bL33 (51 aa).

The protein belongs to the bacterial ribosomal protein bL33 family.

In Marinobacter nauticus (strain ATCC 700491 / DSM 11845 / VT8) (Marinobacter aquaeolei), this protein is Large ribosomal subunit protein bL33.